Here is a 282-residue protein sequence, read N- to C-terminus: Pantothenate synthetase (282 aa).

33 to 40 (MGALHAGH) provides a ligand contact to ATP. Catalysis depends on His40, which acts as the Proton donor. Gln64 contacts (R)-pantoate. Gln64 serves as a coordination point for beta-alanine. Residue 150–153 (GEKD) participates in ATP binding. Position 156 (Gln156) interacts with (R)-pantoate. ATP-binding positions include Val179 and 187 to 190 (LSSR).

The protein belongs to the pantothenate synthetase family. As to quaternary structure, homodimer.

Its subcellular location is the cytoplasm. The enzyme catalyses (R)-pantoate + beta-alanine + ATP = (R)-pantothenate + AMP + diphosphate + H(+). The protein operates within cofactor biosynthesis; (R)-pantothenate biosynthesis; (R)-pantothenate from (R)-pantoate and beta-alanine: step 1/1. Catalyzes the condensation of pantoate with beta-alanine in an ATP-dependent reaction via a pantoyl-adenylate intermediate. The chain is Pantothenate synthetase from Rhodospirillum rubrum (strain ATCC 11170 / ATH 1.1.1 / DSM 467 / LMG 4362 / NCIMB 8255 / S1).